Reading from the N-terminus, the 136-residue chain is Small ribosomal subunit protein uS19 (136 aa).

The disordered stretch occupies residues 117-136 (VQHGDPGMGATRSSMFVPLK).

The protein belongs to the universal ribosomal protein uS19 family.

Protein S19 forms a complex with S13 that binds strongly to the 16S ribosomal RNA. The polypeptide is Small ribosomal subunit protein uS19 (Methanobrevibacter smithii (strain ATCC 35061 / DSM 861 / OCM 144 / PS)).